Here is a 249-residue protein sequence, read N- to C-terminus: Phosphate import ATP-binding protein PstB (249 aa).

In terms of domain architecture, ABC transporter spans 4–244 (IQTKDLNLYY…PKDKRTEDYI (241 aa)). Position 36–43 (36–43 (GPSGCGKS)) interacts with ATP.

It belongs to the ABC transporter superfamily. Phosphate importer (TC 3.A.1.7) family. The complex is composed of two ATP-binding proteins (PstB), two transmembrane proteins (PstC and PstA) and a solute-binding protein (PstS).

It is found in the cell membrane. It catalyses the reaction phosphate(out) + ATP + H2O = ADP + 2 phosphate(in) + H(+). In terms of biological role, part of the ABC transporter complex PstSACB involved in phosphate import. Responsible for energy coupling to the transport system. The polypeptide is Phosphate import ATP-binding protein PstB (Clostridium acetobutylicum (strain ATCC 824 / DSM 792 / JCM 1419 / IAM 19013 / LMG 5710 / NBRC 13948 / NRRL B-527 / VKM B-1787 / 2291 / W)).